The primary structure comprises 214 residues: Thymidylate kinase (214 aa).

7–14 contacts ATP; sequence GIDGAGKS.

Belongs to the thymidylate kinase family.

It carries out the reaction dTMP + ATP = dTDP + ADP. In terms of biological role, phosphorylation of dTMP to form dTDP in both de novo and salvage pathways of dTTP synthesis. The protein is Thymidylate kinase of Chlorobaculum tepidum (strain ATCC 49652 / DSM 12025 / NBRC 103806 / TLS) (Chlorobium tepidum).